Here is a 143-residue protein sequence, read N- to C-terminus: Transcriptional regulator MraZ (143 aa).

2 consecutive SpoVT-AbrB domains span residues E5–E47 and A76–T119.

This sequence belongs to the MraZ family. As to quaternary structure, forms oligomers.

It is found in the cytoplasm. Its subcellular location is the nucleoid. The protein is Transcriptional regulator MraZ of Staphylococcus aureus (strain Mu3 / ATCC 700698).